A 600-amino-acid polypeptide reads, in one-letter code: Elongation factor 4 (600 aa).

One can recognise a tr-type G domain in the interval Lys5–Lys187. GTP contacts are provided by residues Asp17–Thr22 and Asn134–Asp137.

This sequence belongs to the TRAFAC class translation factor GTPase superfamily. Classic translation factor GTPase family. LepA subfamily.

Its subcellular location is the cell inner membrane. It catalyses the reaction GTP + H2O = GDP + phosphate + H(+). Required for accurate and efficient protein synthesis under certain stress conditions. May act as a fidelity factor of the translation reaction, by catalyzing a one-codon backward translocation of tRNAs on improperly translocated ribosomes. Back-translocation proceeds from a post-translocation (POST) complex to a pre-translocation (PRE) complex, thus giving elongation factor G a second chance to translocate the tRNAs correctly. Binds to ribosomes in a GTP-dependent manner. The polypeptide is Elongation factor 4 (Rickettsia bellii (strain OSU 85-389)).